The chain runs to 83 residues: Neurotoxin LmNaTx34.5 (83 aa).

The first 15 residues, 1–15, serve as a signal peptide directing secretion; it reads FILVVIALMVIEVKS. Residues 16–82 enclose the LCN-type CS-alpha/beta domain; it reads DGYLMVRAGR…IWTYEKNTCS (67 aa). 4 disulfide bridges follow: Cys-29-Cys-81, Cys-33-Cys-54, Cys-40-Cys-61, and Cys-44-Cys-63.

Belongs to the long (4 C-C) scorpion toxin superfamily. Sodium channel inhibitor family. Beta subfamily. Expressed by the venom gland.

Its subcellular location is the secreted. Binds voltage-independently at site-4 of sodium channels (Nav) and shift the voltage of activation toward more negative potentials thereby affecting sodium channel activation and promoting spontaneous and repetitive firing. This Lychas mucronatus (Chinese swimming scorpion) protein is Neurotoxin LmNaTx34.5.